A 235-amino-acid chain; its full sequence is Nucleoside diphosphate kinase 4, chloroplastic (235 aa).

Residues Lys93, Phe141, Arg169, Thr175, Arg186, and Asn196 each coordinate ATP. His199 acts as the Pros-phosphohistidine intermediate in catalysis.

The protein belongs to the NDK family. In terms of assembly, homohexamer. It depends on Mg(2+) as a cofactor.

The protein resides in the plastid. It is found in the chloroplast thylakoid lumen. The catalysed reaction is a 2'-deoxyribonucleoside 5'-diphosphate + ATP = a 2'-deoxyribonucleoside 5'-triphosphate + ADP. It carries out the reaction a ribonucleoside 5'-diphosphate + ATP = a ribonucleoside 5'-triphosphate + ADP. In terms of biological role, major role in the synthesis of nucleoside triphosphates other than ATP. The ATP gamma phosphate is transferred to the NDP beta phosphate via a ping-pong mechanism, using a phosphorylated active-site intermediate. Shows the highest specificity towards GDP. The polypeptide is Nucleoside diphosphate kinase 4, chloroplastic (NDK4) (Spinacia oleracea (Spinach)).